Here is a 1092-residue protein sequence, read N- to C-terminus: Myelin regulatory factor (1092 aa).

The Cytoplasmic segment spans residues 1–730 (MDVEDENETL…CVSQRFLQAT (730 aa)). Disordered stretches follow at residues 145-168 (SYAAGTLPDSPPDSGSEAYSPQQL), 187-210 (PPSRLEHPPPPHLQGPLPPHSIHQ), and 258-282 (QQHGAELPVHPSKKRKHSDSPTNTL). The segment covering 196 to 205 (PPHLQGPLPP) has biased composition (pro residues). The NDT80 DNA-binding region spans 246 to 507 (AQQSQMLHQL…SNPGQFESDS (262 aa)). The Peptidase S74 domain occupies 553–662 (SDIRAKESVE…KLTDNLETRI (110 aa)). Positions 646–677 (GAVKELCKLTDNLETRIDELERWSHKLAKLRR) form a coiled coil. The span at 681 to 695 (MKSTNSHTGSSQFSR) shows a compositional bias: polar residues. The segment at 681-714 (MKSTNSHTGSSQFSRAGSVPYKQRPPKVMGKTVP) is disordered. Residues 731–751 (IIALVIIMAFSVISMTTLYVL) form a helical membrane-spanning segment. Residues 752-1092 (NLRSEDDMLG…YYFRFYRLCD (341 aa)) are Lumenal-facing. Disordered stretches follow at residues 798–817 (TTQLKGNTTPPPKITKSPDW) and 849–945 (ITRK…DSRY). Polar residues-rich tracts occupy residues 849–867 (ITRKTSAASAETISQTDPA) and 928–945 (TPITPMDRTQGNSNDSRY). N-linked (GlcNAc...) asparagine glycosylation is found at Asn-941, Asn-961, Asn-974, and Asn-996.

It belongs to the MRF family. In terms of assembly, homotrimer. In terms of processing, follows autocatalytic cleavage via the peptidase S74 domain. Autoprocessing is apparently constitutive and is essential for transcriptional activity.

It localises to the endoplasmic reticulum membrane. The protein localises to the nucleus. The protein resides in the cytoplasm. Constitutes a precursor of the transcription factor. Mediates the autocatalytic cleavage that releases the Myelin regulatory factor, N-terminal component that specifically activates transcription of central nervous system (CNS) myelin genes. Functionally, membrane-bound part that has no transcription factor activity and remains attached to the endoplasmic reticulum membrane following cleavage. In terms of biological role, transcription factor that specifically activates expression of myelin genes during oligodendrocyte (OL) maturation, thereby playing a central role in oligodendrocyte maturation and CNS myelination. In Xenopus laevis (African clawed frog), this protein is Myelin regulatory factor (myrf).